Reading from the N-terminus, the 346-residue chain is MLAARLVCLRTLPSRVFQPTFITKASPLVKNSITKNQWLVTPSREYATKTRIRTHRGKTGQELKEAALEPSMEKIFKIDQMGRWFVAGGAAVGLGALCYYGLGMSNEIGAIEKAVIWPQYVKDRIHSTYMYLAGSIGLTALSALAVARTPALMNFMMTGSWVTIGATFAAMIGAGMLVHSISYEQSPGPKHLAWMLHSGVMGAVVAPLTILGGPLLLRAAWYTAGIVGGLSTVAMCAPSEKFLNMGAPLGVGLGLVFASSLGSMFLPPTSVAGATLYSVAMYGGLVLFSMFLLYDTQKVIKRAEITPMYGAQKYDPINSMLTIYMDTLNIFMRVATMLATGSNRKK.

The transit peptide at 1 to 45 (MLAARLVCLRTLPSRVFQPTFITKASPLVKNSITKNQWLVTPSRE) directs the protein to the mitochondrion. Residues 46–83 (YATKTRIRTHRGKTGQELKEAALEPSMEKIFKIDQMGR) lie on the Mitochondrial matrix side of the membrane. A helical transmembrane segment spans residues 84 to 104 (WFVAGGAAVGLGALCYYGLGM). Over 105-126 (SNEIGAIEKAVIWPQYVKDRIH) the chain is Mitochondrial intermembrane. Residues 127-147 (STYMYLAGSIGLTALSALAVA) form a helical membrane-spanning segment. The Mitochondrial matrix segment spans residues 148-160 (RTPALMNFMMTGS). The chain crosses the membrane as a helical span at residues 161 to 181 (WVTIGATFAAMIGAGMLVHSI). Residues 182–191 (SYEQSPGPKH) lie on the Mitochondrial intermembrane side of the membrane. The helical transmembrane segment at 192–212 (LAWMLHSGVMGAVVAPLTILG) threads the bilayer. The Mitochondrial matrix portion of the chain corresponds to 213 to 214 (GP). The chain crosses the membrane as a helical span at residues 215–235 (LLLRAAWYTAGIVGGLSTVAM). Topologically, residues 236-245 (CAPSEKFLNM) are mitochondrial intermembrane. The chain crosses the membrane as a helical span at residues 246–266 (GAPLGVGLGLVFASSLGSMFL). At 267 to 272 (PPTSVA) the chain is on the mitochondrial matrix side. The helical transmembrane segment at 273-293 (GATLYSVAMYGGLVLFSMFLL) threads the bilayer. At 294 to 346 (YDTQKVIKRAEITPMYGAQKYDPINSMLTIYMDTLNIFMRVATMLATGSNRKK) the chain is on the mitochondrial intermembrane side.

The protein belongs to the BI1 family. In terms of assembly, interacts with LETM1 and AFG3L2. Post-translationally, undergoes AFG3L2-mediated proteolytic degradation, upon hyperpolarization of mitochondria.

It is found in the mitochondrion inner membrane. The catalysed reaction is Ca(2+)(in) + 2 H(+)(out) = Ca(2+)(out) + 2 H(+)(in). It carries out the reaction K(+)(in) + H(+)(out) = K(+)(out) + H(+)(in). Plays an important role in maintenance of mitochondrial morphology and in mediating either calcium or potassium/proton antiport. Mediates proton-dependent calcium efflux from mitochondrion. Also functions as an electroneutral mitochondrial proton/potassium exchanger. Required for the mitochondrial tubular network and cristae organization. Involved in apoptotic release of cytochrome c. Inhibits AFG3L2 proteolytic activity, stimulating respiration and stabilizing respiratory enzymes in actively respiring mitochondria. However, when mitochondria become hyperpolarized, GHITM loses its inhibitory activity toward AFG3L2 and the now active AFG3L2 turns first on GHITM and, if hyperpolarization persists, on other proteins of the mitochondria, leading to a broad remodeling of the mitochondrial proteome. This is Growth hormone-inducible transmembrane protein (Ghitm) from Mus musculus (Mouse).